Here is a 32-residue protein sequence, read N- to C-terminus: Photosystem II reaction center protein T (32 aa).

Residues 3–23 form a helical membrane-spanning segment; the sequence is ALVYTFLLIGTLVVIFFAIFF.

This sequence belongs to the PsbT family. In terms of assembly, PSII is composed of 1 copy each of membrane proteins PsbA, PsbB, PsbC, PsbD, PsbE, PsbF, PsbH, PsbI, PsbJ, PsbK, PsbL, PsbM, PsbT, PsbX, PsbY, PsbZ, Psb30/Ycf12, at least 3 peripheral proteins of the oxygen-evolving complex and a large number of cofactors. It forms dimeric complexes.

It localises to the plastid. It is found in the chloroplast thylakoid membrane. In terms of biological role, found at the monomer-monomer interface of the photosystem II (PS II) dimer, plays a role in assembly and dimerization of PSII. PSII is a light-driven water plastoquinone oxidoreductase, using light energy to abstract electrons from H(2)O, generating a proton gradient subsequently used for ATP formation. This chain is Photosystem II reaction center protein T, found in Emiliania huxleyi (Coccolithophore).